Reading from the N-terminus, the 198-residue chain is Recombination protein RecR (198 aa).

A C4-type zinc finger spans residues 56-71; that stretch reads CTECRDFSETKICAIC. Residues 79–174 enclose the Toprim domain; the sequence is HQLCVVESPP…RPSRLAQGLP (96 aa).

This sequence belongs to the RecR family.

Functionally, may play a role in DNA repair. It seems to be involved in an RecBC-independent recombinational process of DNA repair. It may act with RecF and RecO. This chain is Recombination protein RecR, found in Xylella fastidiosa (strain Temecula1 / ATCC 700964).